The primary structure comprises 206 residues: Large ribosomal subunit protein uL4 (206 aa).

The disordered stretch occupies residues 47–71 (TRAQKGRSEVAGSTRKQWRQKGTGR).

Belongs to the universal ribosomal protein uL4 family. As to quaternary structure, part of the 50S ribosomal subunit.

Its function is as follows. One of the primary rRNA binding proteins, this protein initially binds near the 5'-end of the 23S rRNA. It is important during the early stages of 50S assembly. It makes multiple contacts with different domains of the 23S rRNA in the assembled 50S subunit and ribosome. Forms part of the polypeptide exit tunnel. The sequence is that of Large ribosomal subunit protein uL4 from Nitrosomonas eutropha (strain DSM 101675 / C91 / Nm57).